We begin with the raw amino-acid sequence, 451 residues long: Rab GDP-dissociation inhibitor (451 aa).

Interaction with YPT1 regions lie at residues 106 to 112 and 234 to 259; these read RYVDFKQ and YPMYGLGELPQGFARLSAIYGGTYML.

It belongs to the Rab GDI family. In terms of assembly, interacts with the GDP-bound form of Rab GTPase YPT1. Interacts with YPT10.

The protein localises to the cytoplasm. Regulates the GDP/GTP exchange reaction of SEC4 by inhibiting the dissociation of GDP from it, and the subsequent binding of GTP to SEC4. Plays an essential role in the yeast secretory pathway. Extracts GDP-bound YPT7 from vacuolar membranes, antagonizing vacuolar membrane fusion. The protein is Rab GDP-dissociation inhibitor (GDI1) of Saccharomyces cerevisiae (strain ATCC 204508 / S288c) (Baker's yeast).